The chain runs to 162 residues: Interleukin-15 (162 aa).

An N-terminal signal peptide occupies residues 1–29; it reads MRISKPHLRITSIQCYVCLLLNTHFLTEA. Positions 30 to 48 are excised as a propeptide; that stretch reads GIRVFILGCISAGIPKTEA. 2 disulfide bridges follow: Cys83-Cys133 and Cys90-Cys136. N-linked (GlcNAc...) asparagine glycosylation is found at Asn119, Asn127, and Asn143.

It belongs to the IL-15/IL-21 family.

It is found in the secreted. Functionally, cytokine that plays a major role in the development of inflammatory and protective immune responses to microbial invaders and parasites by modulating immune cells of both the innate and adaptive immune systems. Stimulates the proliferation of natural killer cells, T-cells and B-cells and promotes the secretion of several cytokines. In monocytes, induces the production of IL8 and monocyte chemotactic protein 1/CCL2, two chemokines that attract neutrophils and monocytes respectively to sites of infection. Unlike most cytokines, which are secreted in soluble form, IL15 is expressed in association with its high affinity IL15RA on the surface of IL15-producing cells and delivers signals to target cells that express IL2RB and IL2RG receptor subunits. Binding to its receptor triggers the phosphorylation of JAK1 and JAK3 and the recruitment and subsequent phosphorylation of signal transducer and activator of transcription-3/STAT3 and STAT5. In mast cells, induces the rapid tyrosine phosphorylation of STAT6 and thereby controls mast cell survival and release of cytokines such as IL4. The sequence is that of Interleukin-15 (IL15) from Marmota himalayana (Himalayan marmot).